Reading from the N-terminus, the 963-residue chain is Importin-13 (963 aa).

HEAT repeat units follow at residues 24 to 54, 56 to 88, 95 to 135, 142 to 179, 194 to 231, 236 to 268, 276 to 325, 330 to 372, 375 to 438, 440 to 476, 487 to 522, 524 to 558, 562 to 600, 603 to 648, 676 to 716, 720 to 754, 761 to 803, 815 to 845, 860 to 893, and 897 to 931; these read ENVEKALHQLYYDPNIENKNLAQKWLMQAQV, PQAWHFSWQLLQPDKVPEIQYFGASALHIKISR, TDQY…LSMM, AVADMVRLFQAEDSPVDGQGRCLALLELLTVLPEEFQT, LAVECGAVFPLLEQLLQQPSSPSCVRQKVLKCFSSWVQ, LQDCEALIQAAFAALQDSELFDSSVEAIVNAIS, VNTL…ALLD, WQSF…DDIL, EAEK…YEML, AELLSNLYDKLGRLLTSSEEPYSWQHTEALLYGFQSI, VVPGLIGLIPRISISNVQLADTVMFTIGALSEWLAD, PVMINSVLPLVLHALGNPELSVSSVSTLKKICREC, LPPYAANIVAVSQDVLMKQIHKTSQCMWLMQALGFLLSA, VEEI…SNLF, PVVV…VKTL, FAPMVPQLCEMLGRMYSTIPQASALDLTRQLVHIF, FPPI…ALKR, VKAVFQCAVLALKFPEAPTVKASCGFFTELL, EDGRMLLIAVLEAIGGQASRSLMDCFADILFALN, and FSLLSMWIKEALQPPGFPSARLSPEQKDTFSQQIL. The region spanning 45 to 111 is the Importin N-terminal domain; sequence AQKWLMQAQV…KAQLFTQITR (67 aa).

The protein belongs to the importin beta family. As to quaternary structure, interacts with UBC9, RAN, RBM8A, eIF-1A and PAX6. In terms of tissue distribution, expressed in fetal brain, heart, intestine and kidney.

The protein resides in the cytoplasm. It is found in the nucleus. Its function is as follows. Functions in nuclear protein import as nuclear transport receptor. Serves as receptor for nuclear localization signals (NLS) in cargo substrates. Is thought to mediate docking of the importin/substrate complex to the nuclear pore complex (NPC) through binding to nucleoporin and the complex is subsequently translocated through the pore by an energy requiring, Ran-dependent mechanism. At the nucleoplasmic side of the NPC, Ran binds to the importin, the importin/substrate complex dissociates and importin is re-exported from the nucleus to the cytoplasm where GTP hydrolysis releases Ran. The directionality of nuclear import is thought to be conferred by an asymmetric distribution of the GTP- and GDP-bound forms of Ran between the cytoplasm and nucleus. Mediates the nuclear import of UBC9, the RBM8A/MAGOH complex, PAX6 and probably other members of the paired homeobox family. Also mediates nuclear export of eIF-1A, and the cytoplasmic release of eIF-1A is triggered by the loading of import substrates onto IPO13. The protein is Importin-13 (IPO13) of Homo sapiens (Human).